The primary structure comprises 120 residues: MSKQNELNARRKQRVRARIKKYGSGRPRLSVFRSSKHIYAQIIDDTAGHTLAAASSLDKDLREGLKTGADIDAAKAVGKLIAERATAKGVTAVVFDRGAYLFHGRVKALADAAREAGLQF.

Belongs to the universal ribosomal protein uL18 family. As to quaternary structure, part of the 50S ribosomal subunit; part of the 5S rRNA/L5/L18/L25 subcomplex. Contacts the 5S and 23S rRNAs.

Its function is as follows. This is one of the proteins that bind and probably mediate the attachment of the 5S RNA into the large ribosomal subunit, where it forms part of the central protuberance. This is Large ribosomal subunit protein uL18 from Rhodospirillum centenum (strain ATCC 51521 / SW).